Reading from the N-terminus, the 391-residue chain is Enoyl-CoA delta isomerase 2 (391 aa).

The N-terminal 36 residues, 1–36, are a transit peptide targeting the mitochondrion; it reads MAAVTWSRARCWCPSLLQVLRLPVTKLHLGRPAMRA. Residues 37-122 form the ACB domain; the sequence is TQQDFENAMN…VSSLSSSSEA (86 aa). Lys-49 carries the post-translational modification N6-acetyllysine; alternate. Lys-49 bears the N6-succinyllysine; alternate mark. Lys-53 bears the N6-succinyllysine mark. Residue Lys-60 is modified to N6-acetyllysine; alternate. The residue at position 60 (Lys-60) is an N6-succinyllysine; alternate. 64 to 68 contributes to the an acyl-CoA binding site; sequence YALYK. Lys-68, Lys-79, and Lys-88 each carry N6-succinyllysine. Position 90 is an N6-acetyllysine; alternate (Lys-90). Residue Lys-90 is modified to N6-succinyllysine; alternate. Position 90 (Lys-90) interacts with an acyl-CoA. Ser-99 carries the phosphoserine modification. An an acyl-CoA-binding site is contributed by Tyr-109. Ser-117 is subject to Phosphoserine. Residues Lys-127 and Lys-159 each carry the N6-succinyllysine modification. The interval 149-319 is ECH-like; it reads TKITFNRPSK…AQGLVTEVFP (171 aa). 196–200 is a binding site for substrate; the sequence is SGNDL. Position 286 is an N6-succinyllysine (Lys-286). The short motif at 389-391 is the Microbody targeting signal element; the sequence is PKL.

In the C-terminal section; belongs to the enoyl-CoA hydratase/isomerase family. As to expression, liver (at protein level).

It localises to the peroxisome matrix. The protein localises to the mitochondrion. The enzyme catalyses a (3Z)-enoyl-CoA = a 4-saturated (2E)-enoyl-CoA. It carries out the reaction a (3E)-enoyl-CoA = a 4-saturated (2E)-enoyl-CoA. It catalyses the reaction (2E)-tetradecenoyl-CoA = (3Z)-tetradecenoyl-CoA. The catalysed reaction is (3E)-tetradecenoyl-CoA = (2E)-tetradecenoyl-CoA. The enzyme catalyses (3E)-octenoyl-CoA = (2E)-octenoyl-CoA. It carries out the reaction (3Z)-octenoyl-CoA = (2E)-octenoyl-CoA. It catalyses the reaction (3E)-nonenoyl-CoA = (2E)-nonenoyl-CoA. It participates in lipid metabolism; fatty acid beta-oxidation. Its function is as follows. Able to isomerize both 3-cis and 3-trans double bonds into the 2-trans form in a range of enoyl-CoA species. Has a preference for 3-trans substrates. The chain is Enoyl-CoA delta isomerase 2 from Rattus norvegicus (Rat).